The chain runs to 301 residues: Glycine--tRNA ligase alpha subunit (301 aa).

Belongs to the class-II aminoacyl-tRNA synthetase family. Tetramer of two alpha and two beta subunits.

It localises to the cytoplasm. The enzyme catalyses tRNA(Gly) + glycine + ATP = glycyl-tRNA(Gly) + AMP + diphosphate. This Shewanella denitrificans (strain OS217 / ATCC BAA-1090 / DSM 15013) protein is Glycine--tRNA ligase alpha subunit.